We begin with the raw amino-acid sequence, 1576 residues long: ABC transporter ALT5 (1576 aa).

The next 10 helical transmembrane spans lie at 27 to 47, 72 to 92, 99 to 119, 267 to 287, 289 to 309, 321 to 341, 387 to 407, 417 to 437, 500 to 520, and 525 to 545; these read LKFE…ILAV, ILGF…TQGT, GLFL…VIVC, LPLS…PILP, LVLI…TGFL, GLIG…SLYW, VLAG…AVIV, GFFA…ATVG, ITAM…TLAA, and VATS…APLG. Residues 289-556 enclose the ABC transmembrane type-1 1 domain; the sequence is LVLIGLSISQ…LFQSVAPLMS (268 aa). Residues 602–834 form the ABC transporter 1 domain; the sequence is FRVVNGSFRW…NGGYLQSLCV (233 aa). 636–643 contacts ATP; it reads GPVGSGKS. Transmembrane regions (helical) follow at residues 915-935, 957-977, 981-1001, 1035-1054, 1060-1078, 1142-1162, and 1171-1191; these read VVAL…FAFP, FWVG…FLTM, VTSI…AAIM, LIQF…VLAA, AAMY…KLYL, WLLF…VTLV, and GFAG…ASAM. In terms of domain architecture, ABC transmembrane type-1 2 spans 919–1199; that stretch reads VAFLASAICY…AMQSYAKLET (281 aa). The 332-residue stretch at 1236-1567 folds into the ABC transporter 2 domain; sequence IKLDGVSASY…SHSKFRALCE (332 aa). 1278-1285 contacts ATP; it reads GRSGSGKS.

Belongs to the ABC transporter superfamily. ABCC family. Conjugate transporter (TC 3.A.1.208) subfamily.

It is found in the cell membrane. Its function is as follows. ABC transporter that may provide the dual role AAL-toxin export and self-protection by allowing the fungus to evade the harmful effect of its own AAL-toxin production. This is ABC transporter ALT5 from Alternaria alternata (Alternaria rot fungus).